Consider the following 246-residue polypeptide: ATP synthase subunit a, chloroplastic (246 aa).

The next 5 membrane-spanning stretches (helical) occupy residues 35-55 (AQVL…TFLA), 94-114 (IPFI…GALI), 132-152 (DINT…YAGL), 198-218 (LVVA…MMFL), and 219-239 (GLFT…AYIG).

The protein belongs to the ATPase A chain family. In terms of assembly, F-type ATPases have 2 components, CF(1) - the catalytic core - and CF(0) - the membrane proton channel. CF(1) has five subunits: alpha(3), beta(3), gamma(1), delta(1), epsilon(1). CF(0) has four main subunits: a, b, b' and c.

It localises to the plastid. The protein localises to the chloroplast thylakoid membrane. Its function is as follows. Key component of the proton channel; it plays a direct role in the translocation of protons across the membrane. This is ATP synthase subunit a, chloroplastic from Chara vulgaris (Common stonewort).